Reading from the N-terminus, the 616-residue chain is Dihydroxy-acid dehydratase (616 aa).

Aspartate 81 contacts Mg(2+). Residue cysteine 122 coordinates [2Fe-2S] cluster. Mg(2+) is bound by residues aspartate 123 and lysine 124. Lysine 124 is subject to N6-carboxylysine. Residue cysteine 195 coordinates [2Fe-2S] cluster. Glutamate 491 serves as a coordination point for Mg(2+). Residue serine 517 is the Proton acceptor of the active site.

Belongs to the IlvD/Edd family. Homodimer. [2Fe-2S] cluster is required as a cofactor. Mg(2+) serves as cofactor.

It catalyses the reaction (2R)-2,3-dihydroxy-3-methylbutanoate = 3-methyl-2-oxobutanoate + H2O. The catalysed reaction is (2R,3R)-2,3-dihydroxy-3-methylpentanoate = (S)-3-methyl-2-oxopentanoate + H2O. Its pathway is amino-acid biosynthesis; L-isoleucine biosynthesis; L-isoleucine from 2-oxobutanoate: step 3/4. It participates in amino-acid biosynthesis; L-valine biosynthesis; L-valine from pyruvate: step 3/4. Functionally, functions in the biosynthesis of branched-chain amino acids. Catalyzes the dehydration of (2R,3R)-2,3-dihydroxy-3-methylpentanoate (2,3-dihydroxy-3-methylvalerate) into 2-oxo-3-methylpentanoate (2-oxo-3-methylvalerate) and of (2R)-2,3-dihydroxy-3-methylbutanoate (2,3-dihydroxyisovalerate) into 2-oxo-3-methylbutanoate (2-oxoisovalerate), the penultimate precursor to L-isoleucine and L-valine, respectively. In Escherichia coli O7:K1 (strain IAI39 / ExPEC), this protein is Dihydroxy-acid dehydratase.